A 198-amino-acid polypeptide reads, in one-letter code: UPF0301 protein Tfu_2389 (198 aa).

This sequence belongs to the UPF0301 (AlgH) family.

This is UPF0301 protein Tfu_2389 from Thermobifida fusca (strain YX).